The primary structure comprises 1464 residues: ABC transporter G family member 35 (1464 aa).

The interval 1–26 is disordered; sequence MDAAAEMQKVVSLRRGGGGSSSRGAA. An ABC transporter 1 domain is found at 173 to 446; it reads ANALGILPNK…FELMGFKCPE (274 aa). Residue 206–213 participates in ATP binding; it reads GPPGSGKT. An ABC transmembrane type-2 1 domain is found at 524-737; that stretch reads ELLKANIDRE…AQNAISVNEF (214 aa). Helical transmembrane passes span 542–562, 575–595, 630–650, 662–682, 686–706, 715–735, and 774–794; these read FVYI…MTVF, GVIF…NGLS, IPMS…VIGF, LLML…GGAA, IVAN…GGFI, WWIW…ISVN, and IGFG…TLAL. An ABC transporter 2 domain is found at 867–1119; it reads LTFDNIKYSV…ELIKYFEGIK (253 aa). An ATP-binding site is contributed by 912–919; it reads GVSGAGKT. The 215-residue stretch at 1192–1406 folds into the ABC transmembrane type-2 2 domain; that stretch reads NQCLACLWKM…TLYGLVASQF (215 aa). Transmembrane regions (helical) follow at residues 1213–1233, 1243–1263, 1299–1319, 1326–1346, 1356–1376, 1387–1407, and 1436–1456; these read AIRL…FWDL, LFNA…LNSQ, FPYT…MIGF, FFWY…YGMM, VASI…GFII, WYCW…SQFG, and VVAV…GFAI.

This sequence belongs to the ABC transporter superfamily. ABCG family. PDR (TC 3.A.1.205) subfamily.

The protein resides in the membrane. Its function is as follows. May be a general defense protein. This Oryza sativa subsp. japonica (Rice) protein is ABC transporter G family member 35.